The primary structure comprises 390 residues: Aspergillopepsin-1 (390 aa).

The signal sequence occupies residues 1-19 (MVNTSLLAALTAYAVAVSA). A propeptide spans 20-67 (APTAPQVKGFSVNQVAVPKGVYRHPAAQLAKAYGKYHATVPTQVAAAA) (activation peptide). O-linked (Man...) threonine glycosylation is present at T70. Positions 84–387 (YITQVTVGDD…DASGPRLGFA (304 aa)) constitute a Peptidase A1 domain. Catalysis depends on residues D100 and D281.

The protein belongs to the peptidase A1 family.

The protein resides in the secreted. It catalyses the reaction Hydrolysis of proteins with broad specificity. Generally favors hydrophobic residues in P1 and P1', but also accepts Lys in P1, which leads to activation of trypsinogen. Does not clot milk.. Inhibited by the microbial peptide pepstatin. Functionally, secreted aspartic endopeptidase that allows assimilation of proteinaceous substrates. The scissile peptide bond is attacked by a nucleophilic water molecule activated by two aspartic residues in the active site. Shows a broad primary substrate specificity. Favors hydrophobic residues at the P1 and P1' positions, but also accepts a lysine residue in the P1 position, leading to the activation of trypsinogen and chymotrypsinogen A. The chain is Aspergillopepsin-1 (pepA) from Aspergillus oryzae (Yellow koji mold).